The primary structure comprises 168 residues: Shikimate kinase (168 aa).

ATP is bound at residue 12 to 17 (GAGKST). Residue S16 coordinates Mg(2+). Substrate-binding residues include D34, R58, and G80. R117 contacts ATP. R136 provides a ligand contact to substrate. An ATP-binding site is contributed by R153.

It belongs to the shikimate kinase family. Monomer. Mg(2+) serves as cofactor.

The protein resides in the cytoplasm. The enzyme catalyses shikimate + ATP = 3-phosphoshikimate + ADP + H(+). It functions in the pathway metabolic intermediate biosynthesis; chorismate biosynthesis; chorismate from D-erythrose 4-phosphate and phosphoenolpyruvate: step 5/7. In terms of biological role, catalyzes the specific phosphorylation of the 3-hydroxyl group of shikimic acid using ATP as a cosubstrate. This is Shikimate kinase from Rhodococcus jostii (strain RHA1).